A 166-amino-acid polypeptide reads, in one-letter code: Protein-export protein SecB (166 aa).

The protein belongs to the SecB family. Homotetramer, a dimer of dimers. One homotetramer interacts with 1 SecA dimer.

The protein localises to the cytoplasm. In terms of biological role, one of the proteins required for the normal export of preproteins out of the cell cytoplasm. It is a molecular chaperone that binds to a subset of precursor proteins, maintaining them in a translocation-competent state. It also specifically binds to its receptor SecA. This chain is Protein-export protein SecB, found in Sinorhizobium fredii (strain NBRC 101917 / NGR234).